A 165-amino-acid chain; its full sequence is 6,7-dimethyl-8-ribityllumazine synthase (165 aa).

5-amino-6-(D-ribitylamino)uracil-binding positions include phenylalanine 24, 62-64 (AFE), and 86-88 (AVI). 91–92 (DT) contacts (2S)-2-hydroxy-3-oxobutyl phosphate. Histidine 94 (proton donor) is an active-site residue. Position 119 (phenylalanine 119) interacts with 5-amino-6-(D-ribitylamino)uracil. Arginine 133 is a binding site for (2S)-2-hydroxy-3-oxobutyl phosphate.

Belongs to the DMRL synthase family.

It catalyses the reaction (2S)-2-hydroxy-3-oxobutyl phosphate + 5-amino-6-(D-ribitylamino)uracil = 6,7-dimethyl-8-(1-D-ribityl)lumazine + phosphate + 2 H2O + H(+). The protein operates within cofactor biosynthesis; riboflavin biosynthesis; riboflavin from 2-hydroxy-3-oxobutyl phosphate and 5-amino-6-(D-ribitylamino)uracil: step 1/2. Its function is as follows. Catalyzes the formation of 6,7-dimethyl-8-ribityllumazine by condensation of 5-amino-6-(D-ribitylamino)uracil with 3,4-dihydroxy-2-butanone 4-phosphate. This is the penultimate step in the biosynthesis of riboflavin. The polypeptide is 6,7-dimethyl-8-ribityllumazine synthase (Prochlorococcus marinus (strain MIT 9313)).